The following is a 140-amino-acid chain: Natriuretic peptides B (140 aa).

The N-terminal stretch at M1 to P26 is a signal peptide. The interval L71–L94 is disordered. C118 and C134 form a disulfide bridge.

The protein belongs to the natriuretic peptide family. In terms of processing, the precursor molecule is proteolytically cleaved by the endoproteases FURIN or CORIN at Arg-108 to produce the brain natriuretic peptide 32. CORIN also cleaves the precursor molecule at additional residues including Arg-105, Arg-108 and possibly Lys-111. Undergoes further proteolytic cleavage by various proteases such as DPP4, MME and possibly FAP, to give rise to a variety of shorter peptides. Cleaved at Pro-110 by the prolyl endopeptidase FAP (seprase) activity (in vitro). Degraded by IDE. During IDE degradation, the resulting products initially increase the activation of NPR1 and can also stimulate NPR2 to produce cGMP before the fragments are completely degraded and inactivated by IDE (in vitro). Brain and also in atria, but at much lower levels than ANP.

It is found in the secreted. In terms of biological role, cardiac hormone that plays a key role in mediating cardio-renal homeostasis. May also function as a paracrine antifibrotic factor in the heart. Acts by specifically binding and stimulating NPR1 to produce cGMP, which in turn activates effector proteins that drive various biological responses. Involved in regulating the extracellular fluid volume and maintaining the fluid-electrolyte balance through natriuresis, diuresis, vasorelaxation, and inhibition of renin and aldosterone secretion. Binds the clearance receptor NPR3. Functionally, may affect cardio-renal homeostasis. Able to promote the production of cGMP although its potency is very low compared to brain natriuretic peptide 32. This is Natriuretic peptides B (NPPB) from Canis lupus familiaris (Dog).